Reading from the N-terminus, the 932-residue chain is Isoleucine--tRNA ligase (932 aa).

The 'HIGH' region motif lies at 58–68 (PYANGNLHLGH). Glutamate 567 contributes to the L-isoleucyl-5'-AMP binding site. The short motif at 608–612 (KMSKS) is the 'KMSKS' region element. An ATP-binding site is contributed by lysine 611. Zn(2+)-binding residues include cysteine 895, cysteine 898, cysteine 915, and cysteine 918.

It belongs to the class-I aminoacyl-tRNA synthetase family. IleS type 1 subfamily. In terms of assembly, monomer. Zn(2+) serves as cofactor.

The protein localises to the cytoplasm. It carries out the reaction tRNA(Ile) + L-isoleucine + ATP = L-isoleucyl-tRNA(Ile) + AMP + diphosphate. In terms of biological role, catalyzes the attachment of isoleucine to tRNA(Ile). As IleRS can inadvertently accommodate and process structurally similar amino acids such as valine, to avoid such errors it has two additional distinct tRNA(Ile)-dependent editing activities. One activity is designated as 'pretransfer' editing and involves the hydrolysis of activated Val-AMP. The other activity is designated 'posttransfer' editing and involves deacylation of mischarged Val-tRNA(Ile). This Azoarcus sp. (strain BH72) protein is Isoleucine--tRNA ligase.